We begin with the raw amino-acid sequence, 224 residues long: MELYETSPYFYQEPHFYDGENYLPVHLQGFEPPGYERAELSLSPEARVPLEDKGLGPAEHCPGQCLPWACKVCKRKSVSVDRRRAATLREKRRLKKVNEAFEALKRSTLLNPNQRLPKVEILRSAIQYIERLQALLSSLNQEERDLRYRGGGGPQAAVPSECSSHSASCSPQWGSALEFGPNPGDHLLPADPTDAHNLHSLTSIVDSITVEDVAAAFPDETIPN.

A phosphoserine; by CaMK2G mark is found at Ser77 and Ser79. In terms of domain architecture, bHLH spans 81–132 (DRRRAATLREKRRLKKVNEAFEALKRSTLLNPNQRLPKVEILRSAIQYIERL). A Phosphothreonine; by CaMK2G modification is found at Thr87.

Homodimer and heterodimer with E12; heterodimerization enhances MYOG DNA-binding and transcriptional activities. Interacts with SMARCA4/BRG1/BAF190A. Interacts (via C-terminal region) with SSRP1 and SUPT16H; the interaction is indicative of an interaction with the FACT complex. Interacts with CSRP3. In terms of processing, phosphorylated by CAMK2G on threonine and serine amino acids in a muscle activity-dependent manner. Phosphorylation of Thr-87 impairs both DNA-binding and trans-activation functions in contracting muscles.

The protein resides in the nucleus. Functionally, acts as a transcriptional activator that promotes transcription of muscle-specific target genes and plays a role in muscle differentiation, cell cycle exit and muscle atrophy. Essential for the development of functional embryonic skeletal fiber muscle differentiation. However is dispensable for postnatal skeletal muscle growth; phosphorylation by CAMK2G inhibits its transcriptional activity in respons to muscle activity. Required for the recruitment of the FACT complex to muscle-specific promoter regions, thus promoting gene expression initiation. During terminal myoblast differentiation, plays a role as a strong activator of transcription at loci with an open chromatin structure previously initiated by MYOD1. Together with MYF5 and MYOD1, co-occupies muscle-specific gene promoter core regions during myogenesis. Also cooperates with myocyte-specific enhancer factor MEF2D and BRG1-dependent recruitment of SWI/SNF chromatin-remodeling enzymes to alter chromatin structure at myogenic late gene promoters. Facilitates cell cycle exit during terminal muscle differentiation through the up-regulation of miR-20a expression, which in turn represses genes involved in cell cycle progression. Binds to the E-box containing (E1) promoter region of the miR-20a gene. Also plays a role in preventing reversal of muscle cell differentiation. Contributes to the atrophy-related gene expression in adult denervated muscles. Induces fibroblasts to differentiate into myoblasts. This Bos taurus (Bovine) protein is Myogenin (MYOG).